We begin with the raw amino-acid sequence, 437 residues long: Elongation factor 1-gamma (437 aa).

N-acetylalanine is present on Ala-2. Residues 2 to 87 (AAGTLYTYPE…YVSNEELRGS (86 aa)) form the GST N-terminal domain. A GST C-terminal domain is found at 88–216 (TPEAAAQVVQ…VKLCEKMAQF (129 aa)). An N6-acetyllysine mark is found at Lys-147 and Lys-212. Residues 221-254 (FAESQPKKDTPRKEKGSREEKQKPQAERKEEKKA) are compositionally biased toward basic and acidic residues. The tract at residues 221-268 (FAESQPKKDTPRKEKGSREEKQKPQAERKEEKKAAAPAPEEEMDECEQ) is disordered. Lys-253 participates in a covalent cross-link: Glycyl lysine isopeptide (Lys-Gly) (interchain with G-Cter in SUMO1). One can recognise an EF-1-gamma C-terminal domain in the interval 276–437 (AKDPFAHLPK…KAVNQGKIFK (162 aa)). Lys-285 is covalently cross-linked (Glycyl lysine isopeptide (Lys-Gly) (interchain with G-Cter in SUMO2)). Lys-401 is subject to N6-acetyllysine. An N6-acetyllysine; alternate modification is found at Lys-434. An N6-malonyllysine; alternate modification is found at Lys-434.

As to quaternary structure, EF-1 is composed of four subunits: alpha, beta, delta, and gamma.

Functionally, probably plays a role in anchoring the complex to other cellular components. This chain is Elongation factor 1-gamma (Eef1g), found in Mus musculus (Mouse).